The following is a 207-amino-acid chain: MHIIIAGIDTDVGKTFVSAILTVLLQAEYWKPIQSGSLNHSDSAIVHALSGARCHPESYRFSHALAAHQAAQIDNITMHQETITLPKTDASLIIETSGGFLSPCTHDSLQGDVFAQWPCHWVLVSKAYLGSINHTCLTLEAMRARNLSILGIILNQYPKEEEDWLLRTTGLPFLGRLNYEKSISKATVQNYANLWKETWKYRDTLLC.

11–16 (DVGKTF) provides a ligand contact to ATP. T15 contacts Mg(2+). K31 is an active-site residue. S35 contacts substrate. ATP contacts are provided by residues D42, 95–98 (ETSG), and 155–156 (NQ). D42 and E95 together coordinate Mg(2+).

This sequence belongs to the dethiobiotin synthetase family. In terms of assembly, homodimer. Mg(2+) is required as a cofactor.

It is found in the cytoplasm. It carries out the reaction (7R,8S)-7,8-diammoniononanoate + CO2 + ATP = (4R,5S)-dethiobiotin + ADP + phosphate + 3 H(+). Its pathway is cofactor biosynthesis; biotin biosynthesis; biotin from 7,8-diaminononanoate: step 1/2. In terms of biological role, catalyzes a mechanistically unusual reaction, the ATP-dependent insertion of CO2 between the N7 and N8 nitrogen atoms of 7,8-diaminopelargonic acid (DAPA, also called 7,8-diammoniononanoate) to form a ureido ring. This is ATP-dependent dethiobiotin synthetase BioD from Chlamydia abortus (strain DSM 27085 / S26/3) (Chlamydophila abortus).